The chain runs to 111 residues: uncharacterized protein (111 aa).

4 helical membrane-spanning segments follow: residues Trp3–Ala23, Asp24–Ile44, Ala54–Leu74, and Ala80–Thr100.

The protein belongs to the drug/metabolite transporter (DMT) superfamily. Small multidrug resistance (SMR) (TC 2.A.7.1) family.

It is found in the cell membrane. This is an uncharacterized protein from Bacillus subtilis (strain 168).